The sequence spans 274 residues: Putative homeobox protein Meis3-like 1 (274 aa).

One can recognise an MEIS N-terminal domain in the interval 12-65 (GGDVCSSDSFNEDNTAFAKQVRSERPFFSSNPELDNLMIQAIQVLRFHLLELEK). Disordered stretches follow at residues 108 to 167 (DSGS…KRGI) and 228 to 248 (NRTGQGAAFSPEGQPIGGYTE). The span at 123–135 (GLASQSGDNSSDQ) shows a compositional bias: polar residues. Positions 161 to 223 (RNKKRGIFPK…NARRRIVQPM (63 aa)) form a DNA-binding region, homeobox.

Belongs to the TALE/MEIS homeobox family.

It localises to the nucleus. The chain is Putative homeobox protein Meis3-like 1 (MEIS3P1) from Homo sapiens (Human).